The following is a 500-amino-acid chain: MSNMQQKTDVILIGAGIMSATLGSLLKELAPEWEIKVFEKLASAGEESSNEWNNAGTGHSALCELNYTSEKSDGSIDISKAVKVNEQFQLSRQFWAYLVKSKLIRNPQDFIMPLPHMSLVQGEKNVEFLKNRFEALSKNPLFQGMEFSDAPETLKKWLPLIMEGRTSNEPMAATKIDSGTDVNFGALTRMLFNYLKTKDVELNYKHSVENIKRTKNGLWEVKVHDMNSGKIEHHTAKFVFIGGGGGSLPLLQKTGIPESKHIGGFPVSGLFMVCKNQKVVEQHHAKVYGKAKVGAPPMSVPHLDTRYIDNKKALLFGPFAGFSPKFLKTGSNLDLIGSVKPNNVLTMLAAGVKEMGLTKYLIQQVMLSHEKRMEELREFIPNAKSEDWDIVVAGQRVQVIKDTDAGGKGTLQFGTEVVSAADGSIAALLGASPGASTAVHVMLEVLEKCFPSRMVEWEGKIKEMIPSYGISLTENPRLFQDLHTSTGRTLGLNEKETVHN.

Belongs to the MQO family. Requires FAD as cofactor.

It catalyses the reaction (S)-malate + a quinone = a quinol + oxaloacetate. The protein operates within carbohydrate metabolism; tricarboxylic acid cycle; oxaloacetate from (S)-malate (quinone route): step 1/1. This chain is Probable malate:quinone oxidoreductase, found in Bacillus cereus (strain ZK / E33L).